A 361-amino-acid chain; its full sequence is DNA replication and repair protein RecF (361 aa).

Residue 30-37 participates in ATP binding; that stretch reads GPNGSGKT.

The protein belongs to the RecF family.

The protein localises to the cytoplasm. In terms of biological role, the RecF protein is involved in DNA metabolism; it is required for DNA replication and normal SOS inducibility. RecF binds preferentially to single-stranded, linear DNA. It also seems to bind ATP. The polypeptide is DNA replication and repair protein RecF (Yersinia pseudotuberculosis serotype O:1b (strain IP 31758)).